Here is a 113-residue protein sequence, read N- to C-terminus: UPF0060 membrane protein Arth_4423 (113 aa).

A run of 4 helical transmembrane segments spans residues 7–27, 33–53, 62–82, and 91–111; these read VLLF…VWQA, AWWW…VATL, ILAA…MVFD, and VIGS…PRGT.

This sequence belongs to the UPF0060 family.

Its subcellular location is the cell membrane. The sequence is that of UPF0060 membrane protein Arth_4423 from Arthrobacter sp. (strain FB24).